Reading from the N-terminus, the 642-residue chain is Threonine--tRNA ligase (642 aa).

The 63-residue stretch at 1 to 63 (MSTVTVTLPD…TADVELEIVT (63 aa)) folds into the TGS domain. The catalytic stretch occupies residues 242 to 533 (DHRKIGQEMD…LTEHYNGKFP (292 aa)). The Zn(2+) site is built by C334, H385, and H510.

It belongs to the class-II aminoacyl-tRNA synthetase family. As to quaternary structure, homodimer. Requires Zn(2+) as cofactor.

The protein localises to the cytoplasm. It carries out the reaction tRNA(Thr) + L-threonine + ATP = L-threonyl-tRNA(Thr) + AMP + diphosphate + H(+). Its function is as follows. Catalyzes the attachment of threonine to tRNA(Thr) in a two-step reaction: L-threonine is first activated by ATP to form Thr-AMP and then transferred to the acceptor end of tRNA(Thr). The chain is Threonine--tRNA ligase from Haloarcula marismortui (strain ATCC 43049 / DSM 3752 / JCM 8966 / VKM B-1809) (Halobacterium marismortui).